The chain runs to 212 residues: Ribosomal RNA small subunit methyltransferase G (212 aa).

S-adenosyl-L-methionine contacts are provided by residues Gly-80, Leu-85, Ala-131–Glu-132, and Arg-146.

Belongs to the methyltransferase superfamily. RNA methyltransferase RsmG family.

The protein localises to the cytoplasm. The enzyme catalyses guanosine(527) in 16S rRNA + S-adenosyl-L-methionine = N(7)-methylguanosine(527) in 16S rRNA + S-adenosyl-L-homocysteine. Functionally, specifically methylates the N7 position of guanine in position 527 of 16S rRNA. The sequence is that of Ribosomal RNA small subunit methyltransferase G from Xanthomonas campestris pv. campestris (strain 8004).